We begin with the raw amino-acid sequence, 333 residues long: Glutamyl endopeptidase (333 aa).

The signal sequence occupies residues 1–29 (MKGKFLKVSSLFVATLTTATLVSSPAANA). Positions 30 to 68 (LSSKAMDNHPQQSQSSKQQTPKIQKGGNLKPLEQREHAN) are excised as a propeptide. Residues 33-61 (KAMDNHPQQSQSSKQQTPKIQKGGNLKPL) form a disordered region. Residues 40–54 (QQSQSSKQQTPKIQK) are compositionally biased toward low complexity. Catalysis depends on charge relay system residues H119, D161, and S237. The interval 283 to 333 (FANDDQPNNPDNPDNPNNPDNPNNPDNPNNPNNPDNPDNGDNNNSDNPDAA) is disordered. Over residues 286-333 (DDQPNNPDNPDNPNNPDNPNNPDNPNNPNNPDNPDNGDNNNSDNPDAA) the composition is skewed to low complexity. Tandem repeats lie at residues 289 to 291 (PNN), 292 to 294 (PDN), 295 to 297 (PDN), 298 to 300 (PNN), 301 to 303 (PDN), 304 to 306 (PNN), 307 to 309 (PDN), 310 to 312 (PNN), 313 to 315 (PNN), 316 to 318 (PDN), and 319 to 321 (PDN). Residues 289–321 (PNNPDNPDNPNNPDNPNNPDNPNNPNNPDNPDN) are 11 X 3 AA repeats of P-[DN]-N.

The protein belongs to the peptidase S1B family. In terms of processing, proteolytically cleaved by aureolysin (aur). This cleavage leads to the activation of SspA.

It is found in the secreted. The enzyme catalyses Preferential cleavage: Glu-|-Xaa, Asp-|-Xaa.. In terms of biological role, preferentially cleaves peptide bonds on the carboxyl-terminal side of aspartate and glutamate. Along with other extracellular proteases it is involved in colonization and infection of human tissues. Required for proteolytic maturation of thiol protease SspB and inactivation of SspC, an inhibitor of SspB. It is the most important protease for degradation of fibronectin-binding protein (FnBP) and surface protein A, which are involved in adherence to host cells. May also protect bacteria against host defense mechanism by cleaving the immunoglobulin classes IgG, IgA and IgM. May be involved in the stability of secreted lipases. The sequence is that of Glutamyl endopeptidase (sspA) from Staphylococcus aureus (strain MSSA476).